Here is a 277-residue protein sequence, read N- to C-terminus: Indole-3-glycerol phosphate synthase (277 aa).

This sequence belongs to the TrpC family.

It carries out the reaction 1-(2-carboxyphenylamino)-1-deoxy-D-ribulose 5-phosphate + H(+) = (1S,2R)-1-C-(indol-3-yl)glycerol 3-phosphate + CO2 + H2O. The protein operates within amino-acid biosynthesis; L-tryptophan biosynthesis; L-tryptophan from chorismate: step 4/5. The sequence is that of Indole-3-glycerol phosphate synthase from Pseudomonas putida (strain GB-1).